We begin with the raw amino-acid sequence, 148 residues long: Cuticle protein CP1499 (148 aa).

Calcified shell.

This chain is Cuticle protein CP1499, found in Cancer pagurus (Rock crab).